Consider the following 358-residue polypeptide: Bis(monoacylglycero)phosphate synthase CLN5 (358 aa).

The tract at residues 1-23 (MAQVGSAGPGACGRRGAGAGAGP) is disordered. Residues 1-29 (MAQVGSAGPGACGRRGAGAGAGPERTTWR) lie on the Cytoplasmic side of the membrane. Gly residues predominate over residues 7–21 (AGPGACGRRGAGAGA). The chain crosses the membrane as a helical; Signal-anchor for type II membrane protein span at residues 30 to 46 (WAPALLWLATAAAVAGD). Topologically, residues 47–358 (PSRRQWPVPY…NRKNRTLSGL (312 aa)) are lumenal. 2 disulfides stabilise this stretch: C69–C158 and C76–C164. H116 (proton acceptor) is an active-site residue. N129, N142, N177, and N202 each carry an N-linked (GlcNAc...) asparagine glycan. C230 acts as the Nucleophile; Acyl-thioester intermediate in catalysis. Residues N254, N270, and N280 are each glycosylated (N-linked (GlcNAc...) asparagine). Residues 303–342 (FLLSLLQIFDAVVIHREFYLFYNFEYWFLPMKYPFIKITY) are membrane-anchoring. An N-linked (GlcNAc...) asparagine glycan is attached at N352.

The protein belongs to the CLN5 family. Multimer. Interacts with SORT1, RAB5A and RAB7A. Interacts with PPT1, TPP1, CLN3, CLN6, CLN8, ATP5F1A and ATP5F1B. Post-translationally, N-glycosylated with both high mannose and complex type sugars. Glycosylation is important for proper folding and trafficking to the lysosomes. The type II membrane signal anchor is proteolytically cleaved to produce a mature form that is transported to the lysosomes (Bis(monoacylglycero)phosphate synthase CLN5, secreted form). In terms of processing, can undergo proteolytic cleavage at the C-terminus, probably by a cysteine protease and may involve the removal of approximately 10-15 residues from the C-terminal end.

The protein resides in the lysosome. It localises to the membrane. It carries out the reaction S-hexadecanoyl-L-cysteinyl-[protein] + H2O = L-cysteinyl-[protein] + hexadecanoate + H(+). The enzyme catalyses 2 1-acyl-sn-glycero-3-phospho-(1'-sn-glycerol) = 1-acyl-sn-glycero-3-phospho-(3'-acyl-sn-1'-glycerol) + sn-glycero-3-phospho-(1'-sn-glycerol). It catalyses the reaction 2 1-(9Z-octadecenoyl)-sn-glycero-3-phospho-(1'-sn-glycerol) = 1-(9Z-octadecenoyl)-sn-glycero-3-phospho-(3'-(9Z-octadecenoyl)-1'-sn-glycerol) + sn-glycero-3-phospho-(1'-sn-glycerol). The catalysed reaction is 2 1-octadecanoyl-sn-glycero-3-phospho-(1'-sn-glycerol) = 1-octadecanoyl-sn-glycero-3-phospho-(3'-octadecanoyl-1'-sn-glycerol) + sn-glycero-3-phospho-(1'-sn-glycerol). It carries out the reaction 2 1-hexadecanoyl-sn-glycero-3-phospho-(1'-sn-glycerol) = 1-hexadecanoyl-sn-glycero-3-phospho-(3'-hexadecanoyl-1'-sn-glycerol) + sn-glycero-3-phospho-(1'-sn-glycerol). The enzyme catalyses 2 1-tetradecanoyl-sn-glycero-3-phospho-(1'-sn-glycerol) = 1-tetradecanoyl-sn-glycero-3-phospho-(3'-tetradecanoyl-1'-sn-glycerol) + sn-glycero-3-phospho-(1'-sn-glycerol). Functionally, catalyzes the synthesis of bis(monoacylglycero)phosphate (BMP) via transacylation of 2 molecules of lysophosphatidylglycerol (LPG). BMP also known as lysobisphosphatidic acid plays a key role in the formation of intraluminal vesicles and in maintaining intracellular cholesterol homeostasis. Can use only LPG as the exclusive lysophospholipid acyl donor for base exchange and displays BMP synthase activity towards various LPGs (LPG 14:0, LPG 16:0, LPG 18:0, LPG 18:1) with a higher preference for longer chain lengths. Plays a role in influencing the retrograde trafficking of lysosomal sorting receptors SORT1 and IGF2R from the endosomes to the trans-Golgi network by controlling the recruitment of retromer complex to the endosomal membrane. Regulates the localization and activation of RAB7A which is required to recruit the retromer complex to the endosomal membrane. In terms of biological role, exhibits palmitoyl protein thioesterase (S-depalmitoylation) activity in vitro and most likely plays a role in protein S-depalmitoylation. The chain is Bis(monoacylglycero)phosphate synthase CLN5 (CLN5) from Bos taurus (Bovine).